The following is a 659-amino-acid chain: Pentatricopeptide repeat-containing protein At3g48810 (659 aa).

PPR repeat units follow at residues 75-109, 110-144, 145-179, 180-214, 215-243, 245-279, 280-314, 315-350, 351-385, 386-420, 421-455, 456-490, 492-526, 527-561, 562-598, and 599-633; these read TPLT…GFHC, SEDL…GCDP, SVKI…GFEP, NVFT…GCCP, DAVS…ERFE, VVSV…GISP, NVIS…GCHP, NIYT…GLQP, NVVA…GCSP, NIRT…GCCP, NVVV…NCAP, SVPT…HRCP, NIVT…GVEW, SSST…GKSP, DEIT…KWRP, and DVIS…GIVP.

The protein belongs to the PPR family. P subfamily.

In Arabidopsis thaliana (Mouse-ear cress), this protein is Pentatricopeptide repeat-containing protein At3g48810.